The primary structure comprises 482 residues: Anthocyanin 3'-O-beta-glucosyltransferase (482 aa).

The active-site Proton acceptor is the His16. His16 provides a ligand contact to an anthocyanidin. The active-site Charge relay is the Asp119. Ala349, Gln351, His366, Trp369, Asn370, Ser371, and Glu374 together coordinate UDP-alpha-D-glucose. An anthocyanidin is bound at residue Ala389. 2 residues coordinate UDP-alpha-D-glucose: Glu390 and Gln391.

The protein belongs to the UDP-glycosyltransferase family. In terms of processing, the N-terminus is blocked. As to expression, abundant in petals and barely detected in leaves.

It catalyses the reaction delphinidin 3,5-bis-O-beta-D-glucoside + UDP-alpha-D-glucose = delphinidin 3,3',5-tri-O-beta-D-glucoside + UDP + H(+). Specifically glucosylates the 3'-hydroxy group of delphinidin 3,5-di-O-glucoside to produce gentiodelphin. Shows a strict specificity for UDP-glucose as donor. The chain is Anthocyanin 3'-O-beta-glucosyltransferase from Gentiana triflora (Clustered gentian).